A 493-amino-acid polypeptide reads, in one-letter code: Growth-regulating factor 8 (493 aa).

Residues 149 to 184 (AFSEAQWHELERQRNIYKYMMASVPVPPELLTPFPK) enclose the QLQ domain. The 45-residue stretch at 243-287 (DLEPWRCKRTDGKKWRCSRNVIPDQKYCERHTHKSRPRSRKHVES) folds into the WRC domain. Short sequence motifs (bipartite nuclear localization signal) lie at residues 248–258 (RCKRTDGKKWR) and 276–283 (KSRPRSRK). Residues 270–302 (CERHTHKSRPRSRKHVESSHQSSHHNDIRTAKN) form a disordered region. Residues 273–283 (HTHKSRPRSRK) show a composition bias toward basic residues.

This sequence belongs to the GRF family. Predominantly expressed in shoot tips and flowers.

It localises to the nucleus. Transcription activator that plays a role in the regulation of cell expansion in leaf and cotyledons tissues. Component of a network formed by miR396, the GRFs and their interacting factors (GIFs) acting in the regulation of meristem function, at least partially through the control of cell proliferation. This is Growth-regulating factor 8 (GRF8) from Arabidopsis thaliana (Mouse-ear cress).